The sequence spans 315 residues: tRNA dimethylallyltransferase (315 aa).

9–16 (GPTASGKT) serves as a coordination point for ATP. Residue 11-16 (TASGKT) coordinates substrate. Interaction with substrate tRNA stretches follow at residues 34-37 (DSLL) and 158-162 (QRIQR).

This sequence belongs to the IPP transferase family. Monomer. It depends on Mg(2+) as a cofactor.

The catalysed reaction is adenosine(37) in tRNA + dimethylallyl diphosphate = N(6)-dimethylallyladenosine(37) in tRNA + diphosphate. In terms of biological role, catalyzes the transfer of a dimethylallyl group onto the adenine at position 37 in tRNAs that read codons beginning with uridine, leading to the formation of N6-(dimethylallyl)adenosine (i(6)A). This chain is tRNA dimethylallyltransferase, found in Acidithiobacillus ferrooxidans (strain ATCC 53993 / BNL-5-31) (Leptospirillum ferrooxidans (ATCC 53993)).